The following is a 977-amino-acid chain: MARSRTAGRCNPFAFYRVPVTVFVTLIYVALLAPIIVVHHILPAVPESDVEGLDLHEAWRDLQHLTNGFHPYNSHKNDEVRSWLLTRIDEIVSTNVKDAKQQDGVRTFVFDDNQSNLTVVQSNLGVYFEGTNIIVYICGQEDDKREWWKEPGLSPSGKGGVLVNAHYDSVSTGYGATDDGVGVISCLQLIKYFTTPGHEPTRGLVVLLNNGEEDFLNGARVYSQHPISKLPHTFLNLEGAGAGGRATLFRSSDTEVTKFYQRSPYPFGSVFSDAGFKLGMIRSQTDYIVFEGDMGLRGLDVAFMEPRARYHTNQDDAKHTSQQSLWHMLSAAVATTEGLVSDTSHDFEGRPQGPGKVPSGTGSGAVWFDLFGTAFAVFEIHTLFALSVTLLIVGPLTLFITSIILANQDRMYLFGISVPVDDGFGSVPLRGWRGFFRFPFIFGSTTASVVALAYLMAKINPMIAHSSEYAVWSMMISAWVFVAWFLSRIANFARPSALHRIYVLTWMFLLTWVLLVITTVYENRDGIASGYFVIFYAFGTFMATWISYLELFSLPKKSDFANKVSGQISSRPTSLGGSRLLTPSGESVGQHPEDEEPTESTSLLRGQRTSFANYTRPVEDDGDGDLLSTGVSTDVSEARDFNVYGYEQPWSANLPKWTWILQFLLIAPIVIILIGQLGLLITSAIHQTMQDGSSTLVPYLIIALLTTFLFMPTLPFIHRYTYHIPTFLFLIFVATLVYNLVAFPFSGNNRTKLFFLQEVDLDTGANRVSLTGIQPFVSDAVASIPSADGQNISCIPKMDRTECSWESSLVPHVITHPGSEKEETPLNEWVKYKATRLEPGSQNSNRAQIKISGLNTRGCLLHFDKPITRFHVTGSAIDSRFPSNPSLEDGTEDGVREIRLWSRTWGNQWVVDAEWASDEDVNNEEDTLTGKATCLWSDANTQGAIPALDEVIQYSPDWVAITKLDAGLVKGSRSFEV.

At 1–17 (MARSRTAGRCNPFAFYR) the chain is on the cytoplasmic side. A helical transmembrane segment spans residues 18–38 (VPVTVFVTLIYVALLAPIIVV). Topologically, residues 39–383 (HHILPAVPES…AFAVFEIHTL (345 aa)) are vacuolar. 2 N-linked (GlcNAc...) asparagine glycosylation sites follow: N113 and N116. Zn(2+)-binding residues include H166 and D178. The active-site Proton acceptor is E212. Zn(2+) is bound by residues E213, E238, and H311. Residues 384–404 (FALSVTLLIVGPLTLFITSII) traverse the membrane as a helical segment. The Cytoplasmic portion of the chain corresponds to 405–438 (LANQDRMYLFGISVPVDDGFGSVPLRGWRGFFRF). Residues 439-459 (PFIFGSTTASVVALAYLMAKI) form a helical membrane-spanning segment. The Vacuolar portion of the chain corresponds to 460-469 (NPMIAHSSEY). The helical transmembrane segment at 470–490 (AVWSMMISAWVFVAWFLSRIA) threads the bilayer. Topologically, residues 491–500 (NFARPSALHR) are cytoplasmic. Residues 501 to 521 (IYVLTWMFLLTWVLLVITTVY) traverse the membrane as a helical segment. At 522-525 (ENRD) the chain is on the vacuolar side. A helical membrane pass occupies residues 526–546 (GIASGYFVIFYAFGTFMATWI). Residues 547–659 (SYLELFSLPK…WSANLPKWTW (113 aa)) lie on the Cytoplasmic side of the membrane. Positions 566–576 (GQISSRPTSLG) are enriched in polar residues. Residues 566 to 604 (GQISSRPTSLGGSRLLTPSGESVGQHPEDEEPTESTSLL) are disordered. A helical transmembrane segment spans residues 660–680 (ILQFLLIAPIVIILIGQLGLL). The Vacuolar portion of the chain corresponds to 681-696 (ITSAIHQTMQDGSSTL). A helical transmembrane segment spans residues 697–717 (VPYLIIALLTTFLFMPTLPFI). Residues 718–726 (HRYTYHIPT) are Cytoplasmic-facing. The chain crosses the membrane as a helical span at residues 727–747 (FLFLIFVATLVYNLVAFPFSG). Residues 748–977 (NNRTKLFFLQ…LVKGSRSFEV (230 aa)) are Vacuolar-facing. Residues N749 and N791 are each glycosylated (N-linked (GlcNAc...) asparagine).

It belongs to the peptidase M28 family. Requires Zn(2+) as cofactor.

The protein localises to the vacuole membrane. Functionally, may be involved in vacuolar sorting and osmoregulation. This chain is Vacuolar membrane protease, found in Talaromyces marneffei (strain ATCC 18224 / CBS 334.59 / QM 7333) (Penicillium marneffei).